Consider the following 262-residue polypeptide: Malonyl-[acyl-carrier protein] O-methyltransferase (262 aa).

Belongs to the methyltransferase superfamily.

It catalyses the reaction malonyl-[ACP] + S-adenosyl-L-methionine = malonyl-[ACP] methyl ester + S-adenosyl-L-homocysteine. The protein operates within cofactor biosynthesis; biotin biosynthesis. Functionally, converts the free carboxyl group of a malonyl-thioester to its methyl ester by transfer of a methyl group from S-adenosyl-L-methionine (SAM). It allows to synthesize pimeloyl-ACP via the fatty acid synthetic pathway. This Dechloromonas aromatica (strain RCB) protein is Malonyl-[acyl-carrier protein] O-methyltransferase.